The primary structure comprises 802 residues: Leucine--tRNA ligase (802 aa).

A 'HIGH' region motif is present at residues 40 to 51; that stretch reads PYPSGAGLHVGH. Positions 576 to 580 match the 'KMSKS' region motif; sequence KMSKS. Residue Lys-579 coordinates ATP.

This sequence belongs to the class-I aminoacyl-tRNA synthetase family.

The protein resides in the cytoplasm. It catalyses the reaction tRNA(Leu) + L-leucine + ATP = L-leucyl-tRNA(Leu) + AMP + diphosphate. The polypeptide is Leucine--tRNA ligase (Bacillus cereus (strain ATCC 14579 / DSM 31 / CCUG 7414 / JCM 2152 / NBRC 15305 / NCIMB 9373 / NCTC 2599 / NRRL B-3711)).